An 84-amino-acid polypeptide reads, in one-letter code: NADH-ubiquinone oxidoreductase chain 4L (84 aa).

2 helical membrane passes run 18 to 38 and 51 to 71; these read IISL…KIIY and FALF…SLLV.

This sequence belongs to the complex I subunit 4L family.

The protein localises to the mitochondrion membrane. It carries out the reaction a ubiquinone + NADH + 5 H(+)(in) = a ubiquinol + NAD(+) + 4 H(+)(out). In terms of biological role, core subunit of the mitochondrial membrane respiratory chain NADH dehydrogenase (Complex I) that is believed to belong to the minimal assembly required for catalysis. Complex I functions in the transfer of electrons from NADH to the respiratory chain. The immediate electron acceptor for the enzyme is believed to be ubiquinone. The protein is NADH-ubiquinone oxidoreductase chain 4L (ND4L) of Debaryomyces hansenii (strain ATCC 36239 / CBS 767 / BCRC 21394 / JCM 1990 / NBRC 0083 / IGC 2968) (Yeast).